The sequence spans 993 residues: uncharacterized protein (993 aa).

The first 24 residues, 1-24 (MLLFKFNFTTAFLFTILAFAQARS), serve as a signal peptide directing secretion. N7, N44, N89, N121, N138, N161, N169, N232, N361, N386, N393, N423, N447, N480, and N488 each carry an N-linked (GlcNAc...) asparagine glycan. The active site involves E504. Residues N545, N548, and N614 are each glycosylated (N-linked (GlcNAc...) asparagine). D672 serves as the catalytic Proton donor. Residues N673, N814, N826, N835, N846, N910, N940, and N987 are each glycosylated (N-linked (GlcNAc...) asparagine).

It belongs to the glycosyl hydrolase 31 family.

This is an uncharacterized protein from Schizosaccharomyces pombe (strain 972 / ATCC 24843) (Fission yeast).